We begin with the raw amino-acid sequence, 831 residues long: Periplasmic nitrate reductase (831 aa).

The tat-type signal signal peptide spans M1–A29. The 4Fe-4S Mo/W bis-MGD-type domain occupies I41–D97. Residues C48, C51, C55, and C83 each contribute to the [4Fe-4S] cluster site. Residues K85, Q152, N177, C181, W214–M221, S245–H249, Q264–D266, M374, Q378, N484, S510–D511, K533, D560, and T720–S729 contribute to the Mo-bis(molybdopterin guanine dinucleotide) site. W796 is a binding site for substrate. Mo-bis(molybdopterin guanine dinucleotide) is bound by residues N804 and K821.

This sequence belongs to the prokaryotic molybdopterin-containing oxidoreductase family. NasA/NapA/NarB subfamily. Component of the periplasmic nitrate reductase NapAB complex composed of NapA and NapB. [4Fe-4S] cluster serves as cofactor. Mo-bis(molybdopterin guanine dinucleotide) is required as a cofactor. Predicted to be exported by the Tat system. The position of the signal peptide cleavage has not been experimentally proven.

It is found in the periplasm. The enzyme catalyses 2 Fe(II)-[cytochrome] + nitrate + 2 H(+) = 2 Fe(III)-[cytochrome] + nitrite + H2O. Functionally, catalytic subunit of the periplasmic nitrate reductase complex NapAB. Receives electrons from NapB and catalyzes the reduction of nitrate to nitrite. The chain is Periplasmic nitrate reductase from Psychromonas ingrahamii (strain DSM 17664 / CCUG 51855 / 37).